The primary structure comprises 272 residues: MFDIIKAVIIGIVEGLTEFLPISSTGHIDLVNHVIKLSQSQDFINMFEYVIQFGAILAVILLYFNKLNPFSKPTAKARNATWQLWAKVIIAVLPSVVVGLPLNNWMDEHLHTPLVVATTLIIYGVLFIILENYLKNKNAHITTLADITYQTALLIGLFQVLSIVPGTSRSGATILGALLIGTSRYVATEFSFFLAIPTMVGVSILKIGKYLWQGNGFSGEQWAVLMTGSIVSFLVAIVAIKWLLKFVQTHDFKPFGWYRIALGAIVLLVMFI.

7 helical membrane passes run 2 to 22 (FDII…FLPI), 43 to 63 (FINM…ILLY), 82 to 102 (WQLW…GLPL), 110 to 130 (LHTP…FIIL), 185 to 205 (YVAT…VSIL), 224 to 244 (VLMT…KWLL), and 252 to 272 (FKPF…VMFI).

It belongs to the UppP family.

It is found in the cell membrane. The enzyme catalyses di-trans,octa-cis-undecaprenyl diphosphate + H2O = di-trans,octa-cis-undecaprenyl phosphate + phosphate + H(+). Its function is as follows. Catalyzes the dephosphorylation of undecaprenyl diphosphate (UPP). Confers resistance to bacitracin. This chain is Undecaprenyl-diphosphatase, found in Lacticaseibacillus paracasei (strain ATCC 334 / BCRC 17002 / CCUG 31169 / CIP 107868 / KCTC 3260 / NRRL B-441) (Lactobacillus paracasei).